A 514-amino-acid chain; its full sequence is Inosine-5'-monophosphate dehydrogenase (514 aa).

2 consecutive CBS domains span residues 112–171 and 175–233; these read FISK…DTPV and MTRR…PHST. NAD(+) contacts are provided by residues 270 to 272 and 320 to 322; these read DSS and GMG. Residues G322 and G324 each coordinate K(+). S325 lines the IMP pocket. A K(+)-binding site is contributed by C327. Catalysis depends on C327, which acts as the Thioimidate intermediate. Residues 360 to 362, 383 to 384, and 407 to 411 each bind IMP; these read DGG, GG, and YRGMG. R425 serves as the catalytic Proton acceptor. Q437 lines the IMP pocket. K(+) is bound by residues E496, G497, and G498. The Microbody targeting signal signature appears at 512–514; it reads AKM.

Belongs to the IMPDH/GMPR family. In terms of assembly, heterotetramer. Interacts with glycosomal protein sorting receptor PEX5. K(+) serves as cofactor.

The protein resides in the glycosome. It carries out the reaction IMP + NAD(+) + H2O = XMP + NADH + H(+). It functions in the pathway purine metabolism; XMP biosynthesis via de novo pathway; XMP from IMP: step 1/1. With respect to regulation, mycophenolic acid (MPA) is a non-competitive inhibitor that prevents formation of the closed enzyme conformation by binding to the same site as the amobile flap. In contrast, mizoribine monophosphate (MZP) is a competitive inhibitor that induces the closed conformation. MPA is a potent inhibitor of mammalian IMPDHs but a poor inhibitor of the bacterial enzymes. MZP is a more potent inhibitor of bacterial IMPDH. Potently inhibited by MPA. Inhibited by XMP and GMP. Functionally, catalyzes the conversion of inosine 5'-phosphate (IMP) to xanthosine 5'-phosphate (XMP), the first committed and rate-limiting step in the de novo synthesis of guanine nucleotides, and therefore plays an important role in the regulation of cell growth. In Leishmania donovani, this protein is Inosine-5'-monophosphate dehydrogenase.